We begin with the raw amino-acid sequence, 489 residues long: Lysine--tRNA ligase (489 aa).

E399 and E406 together coordinate Mg(2+).

This sequence belongs to the class-II aminoacyl-tRNA synthetase family. As to quaternary structure, homodimer. It depends on Mg(2+) as a cofactor.

It is found in the cytoplasm. It catalyses the reaction tRNA(Lys) + L-lysine + ATP = L-lysyl-tRNA(Lys) + AMP + diphosphate. This Roseiflexus castenholzii (strain DSM 13941 / HLO8) protein is Lysine--tRNA ligase.